The primary structure comprises 167 residues: SsrA-binding protein (167 aa).

Over residues 139 to 158 (QNHDKRDAAKERDWQRDKQR) the composition is skewed to basic and acidic residues. The interval 139–167 (QNHDKRDAAKERDWQRDKQRVMRRHNRDA) is disordered.

The protein belongs to the SmpB family.

It localises to the cytoplasm. Required for rescue of stalled ribosomes mediated by trans-translation. Binds to transfer-messenger RNA (tmRNA), required for stable association of tmRNA with ribosomes. tmRNA and SmpB together mimic tRNA shape, replacing the anticodon stem-loop with SmpB. tmRNA is encoded by the ssrA gene; the 2 termini fold to resemble tRNA(Ala) and it encodes a 'tag peptide', a short internal open reading frame. During trans-translation Ala-aminoacylated tmRNA acts like a tRNA, entering the A-site of stalled ribosomes, displacing the stalled mRNA. The ribosome then switches to translate the ORF on the tmRNA; the nascent peptide is terminated with the 'tag peptide' encoded by the tmRNA and targeted for degradation. The ribosome is freed to recommence translation, which seems to be the essential function of trans-translation. The polypeptide is SsrA-binding protein (Xanthomonas oryzae pv. oryzae (strain MAFF 311018)).